The sequence spans 26 residues: Beta-hexosaminidase (26 aa).

In terms of processing, glycosylated. In terms of tissue distribution, detected in dry seeds and cotyledons.

It catalyses the reaction Hydrolysis of terminal non-reducing N-acetyl-D-hexosamine residues in N-acetyl-beta-D-hexosaminides.. Its activity is regulated as follows. Inhibited by AgNO(3) at a concentration of 0.1 mM. Strongly inhibited by CdCl(2), ZnCl(2) and FeCl(3) and moderately by CoCl(2), CuSO(4) and NiCl(2) at 10 mM concentration. CaCl(2), MgCl(2), MnSO(4) and KI also have a slight inhibitory effect of 20%-25% at 10 mM concentration. Activated to a small extent by MgCl(2) at 0.1 mM concentration but inhibited with increasing concentration. Not affected by carbohydrates such as fucose, galactose and glucose but displays a slight decrease in activity up to 25% with lactose, alpha-mannose and N-acetyl-galactosamine (GalNAc). Functionally, has hexosaminidase activity. Active with both p-nitrophenyl-beta-D-N-acetylglucosamine (pNP-GlcNAc) and p-nitrophenyl-beta-D-N-acetylgalactosamine (pNP-GalNAc). Not active toward p-nitrophenyl-beta-D-N,N'-diacetylchitobiose (pNP-(GlcNAc)2) or p-nitrophenyl-beta-D-N,N',N''-triacetylchitobiose (pNP-(GlcNAc)3). Removes terminal GlcNAc and may be involved in storage protein degradation. The chain is Beta-hexosaminidase from Lupinus albus (White lupine).